We begin with the raw amino-acid sequence, 249 residues long: Probable transcriptional regulatory protein Sare_1779 (249 aa).

Belongs to the TACO1 family.

It is found in the cytoplasm. The polypeptide is Probable transcriptional regulatory protein Sare_1779 (Salinispora arenicola (strain CNS-205)).